Reading from the N-terminus, the 110-residue chain is UPF0213 protein DVU_3309 (110 aa).

In terms of domain architecture, GIY-YIG spans 8-83 (EVWFVYLLRC…KRQPTDQKLA (76 aa)).

This sequence belongs to the UPF0213 family.

The sequence is that of UPF0213 protein DVU_3309 from Nitratidesulfovibrio vulgaris (strain ATCC 29579 / DSM 644 / CCUG 34227 / NCIMB 8303 / VKM B-1760 / Hildenborough) (Desulfovibrio vulgaris).